Here is a 783-residue protein sequence, read N- to C-terminus: Outer membrane usher protein FanD (783 aa).

Residues 1–23 (MNRKKHQILKILLLCLISSKSSA) form the signal peptide. Cysteine 763 and cysteine 782 are joined by a disulfide.

It belongs to the fimbrial export usher family.

The protein resides in the cell outer membrane. In terms of biological role, involved in the export and assembly of K99 fimbrial subunits across the outer membrane. The protein is Outer membrane usher protein FanD (fanD) of Escherichia coli.